Reading from the N-terminus, the 348-residue chain is Putative zinc metalloprotease HP_0258 (348 aa).

Histidine 16 serves as a coordination point for Zn(2+). Glutamate 17 is an active-site residue. Histidine 20 contributes to the Zn(2+) binding site. The next 5 helical transmembrane spans lie at 43 to 63, 93 to 113, 247 to 267, 275 to 295, and 324 to 344; these read CFFK…GGYV, WILF…YFFL, LIMG…VGAL, MLLL…LLPI, and LWLA…FNDL. The PDZ domain maps to 106–175; sequence AILVYFFLAL…GELVLEIERN (70 aa).

Belongs to the peptidase M50B family. It depends on Zn(2+) as a cofactor.

It is found in the cell inner membrane. The protein is Putative zinc metalloprotease HP_0258 of Helicobacter pylori (strain ATCC 700392 / 26695) (Campylobacter pylori).